A 106-amino-acid chain; its full sequence is MLTTTLLFIATAMAEIIGCYLPWLWLRQQGSPWLLVPAAASLTLFVWLLSLHPAASGRVYAAYGGVYVVCALVWLWGVDGEALRPTDWIGAALALTGMGVIASGWR.

The next 4 helical transmembrane spans lie at 6–26 (LLFI…WLWL), 31–51 (SPWL…LLSL), 59–79 (VYAA…WGVD), and 85–105 (PTDW…ASGW).

This sequence belongs to the UPF0060 family.

Its subcellular location is the cell inner membrane. In Chromohalobacter salexigens (strain ATCC BAA-138 / DSM 3043 / CIP 106854 / NCIMB 13768 / 1H11), this protein is UPF0060 membrane protein Csal_2746.